The primary structure comprises 180 residues: Interleukin-1-binding protein (180 aa).

The first 20 residues, 1–20 (MSILPVIFLPIFFYSPFVQT), serve as a signal peptide directing secretion. N-linked (GlcNAc...) asparagine; by host glycosylation is found at asparagine 80, asparagine 103, and asparagine 113.

This sequence belongs to the interleukin-1 receptor family. As to quaternary structure, interacts with mouse Il1b.

Its subcellular location is the secreted. Its function is as follows. May reduce the host inflammatory response by interacting with inteleukin-1 beta (Il1b) and thus decreasing the association between IL1B and its cellular receptor. The chain is Interleukin-1-binding protein (OPG201) from Monkeypox virus.